Consider the following 324-residue polypeptide: Putative ribose-phosphate pyrophosphokinase 1 (324 aa).

ATP contacts are provided by residues 43–45 and 102–103; these read DGE and RQ. H136 is a Mg(2+) binding site. D-ribose 5-phosphate contacts are provided by residues D225 and 229-233; that span reads NTGQT.

The protein belongs to the ribose-phosphate pyrophosphokinase family. Class I subfamily. As to quaternary structure, homohexamer. The cofactor is Mg(2+).

Its subcellular location is the cytoplasm. It catalyses the reaction D-ribose 5-phosphate + ATP = 5-phospho-alpha-D-ribose 1-diphosphate + AMP + H(+). It functions in the pathway metabolic intermediate biosynthesis; 5-phospho-alpha-D-ribose 1-diphosphate biosynthesis; 5-phospho-alpha-D-ribose 1-diphosphate from D-ribose 5-phosphate (route I): step 1/1. Functionally, involved in the biosynthesis of the central metabolite phospho-alpha-D-ribosyl-1-pyrophosphate (PRPP) via the transfer of pyrophosphoryl group from ATP to 1-hydroxyl of ribose-5-phosphate (Rib-5-P). The sequence is that of Putative ribose-phosphate pyrophosphokinase 1 from Enterococcus faecalis (strain ATCC 700802 / V583).